Reading from the N-terminus, the 86-residue chain is Small ribosomal subunit protein bS16 (86 aa).

This sequence belongs to the bacterial ribosomal protein bS16 family.

This Bordetella petrii (strain ATCC BAA-461 / DSM 12804 / CCUG 43448) protein is Small ribosomal subunit protein bS16.